Here is a 238-residue protein sequence, read N- to C-terminus: Pyridoxine 5'-phosphate synthase (238 aa).

3-amino-2-oxopropyl phosphate is bound by residues N7 and R18. The Proton acceptor role is filled by H43. Residues R45 and H50 each contribute to the 1-deoxy-D-xylulose 5-phosphate site. The active-site Proton acceptor is E70. T100 lines the 1-deoxy-D-xylulose 5-phosphate pocket. H190 (proton donor) is an active-site residue. 3-amino-2-oxopropyl phosphate is bound by residues D191 and 213 to 214 (GH).

This sequence belongs to the PNP synthase family. As to quaternary structure, homooctamer; tetramer of dimers.

The protein localises to the cytoplasm. The catalysed reaction is 3-amino-2-oxopropyl phosphate + 1-deoxy-D-xylulose 5-phosphate = pyridoxine 5'-phosphate + phosphate + 2 H2O + H(+). Its pathway is cofactor biosynthesis; pyridoxine 5'-phosphate biosynthesis; pyridoxine 5'-phosphate from D-erythrose 4-phosphate: step 5/5. Its function is as follows. Catalyzes the complicated ring closure reaction between the two acyclic compounds 1-deoxy-D-xylulose-5-phosphate (DXP) and 3-amino-2-oxopropyl phosphate (1-amino-acetone-3-phosphate or AAP) to form pyridoxine 5'-phosphate (PNP) and inorganic phosphate. The protein is Pyridoxine 5'-phosphate synthase of Phocaeicola vulgatus (strain ATCC 8482 / DSM 1447 / JCM 5826 / CCUG 4940 / NBRC 14291 / NCTC 11154) (Bacteroides vulgatus).